A 582-amino-acid chain; its full sequence is Frizzled-10 (582 aa).

The N-terminal stretch at 1 to 21 (MQHPGPRLWLVLQVMIGSCTA) is a signal peptide. At 22-226 (ISSMDLERPG…DVYWSRDDKR (205 aa)) the chain is on the extracellular side. An FZ domain is found at 30-151 (PGDGKCQPVE…NDPNYLCMEA (122 aa)). Cystine bridges form between C35–C96, C43–C89, C80–C118, C107–C148, and C111–C135. An N-linked (GlcNAc...) asparagine glycan is attached at N49. The disordered stretch occupies residues 153–189 (NNGSDEPSRGSGMFPPLFRPQRPHSAQEHPLKDGGPG). An N-linked (GlcNAc...) asparagine glycan is attached at N154. The helical transmembrane segment at 227–247 (FAVVWLAIWSVLCFFSSAFTV) threads the bilayer. Topologically, residues 248-263 (LTFLIDPSRFRYPERP) are cytoplasmic. The chain crosses the membrane as a helical span at residues 264 to 284 (IIFLSMCYCVYSVGYIIRLFA). Residues 285–312 (GAESIACDRDSGQLYVIQEGLESTGCTL) lie on the Extracellular side of the membrane. A helical membrane pass occupies residues 313 to 333 (VFLVLYYFGMASSLWWVVLTL). Residues 334–352 (TWFLAAGKKWGHEAIEANS) are Cytoplasmic-facing. A helical transmembrane segment spans residues 353–373 (SYFHLAAWAIPAVKTILILVM). Over 374–394 (RRVAGDELTGVCYVGSMDVNA) the chain is Extracellular. Residues 395–415 (LTGFVLVPLACYLVIGTSFIL) traverse the membrane as a helical segment. Residues 416 to 444 (SGFVALFHIRRVMKTGGENTDKLEKLMVR) are Cytoplasmic-facing. The helical transmembrane segment at 445–465 (IGVFSLLYTVPATCVIACYFY) threads the bilayer. The Extracellular portion of the chain corresponds to 466–503 (ERLNMDYWKMLATQHKCKMNNQTKTPDCLMTTSIPAVE). N486 is a glycosylation site (N-linked (GlcNAc...) asparagine). The helical transmembrane segment at 504–524 (VFMVKVSMLLVVGITSGVWVW) threads the bilayer. At 525–582 (TSKTLQSWQHVCSRGLKRKSRRKPASVVTSAGIYKKAQHPQKPHLGKYELPAQPSACV) the chain is on the cytoplasmic side. The Lys-Thr-X-X-X-Trp motif, mediates interaction with the PDZ domain of Dvl family members motif lies at 527–532 (KTLQSW). Positions 561-582 (AQHPQKPHLGKYELPAQPSACV) are disordered. Residues 580 to 582 (ACV) carry the PDZ-binding motif.

It belongs to the G-protein coupled receptor Fz/Smo family. As to quaternary structure, interacts with MYOC. Interacts with WNT7B. In terms of processing, ubiquitinated by ZNRF3, leading to its degradation by the proteasome.

The protein resides in the cell membrane. In terms of biological role, receptor for Wnt proteins. Functions in the canonical Wnt/beta-catenin signaling pathway. The canonical Wnt/beta-catenin signaling pathway leads to the activation of disheveled proteins, inhibition of GSK-3 kinase, nuclear accumulation of beta-catenin and activation of Wnt target genes. A second signaling pathway involving PKC and calcium fluxes has been seen for some family members, but it is not yet clear if it represents a distinct pathway or if it can be integrated in the canonical pathway, as PKC seems to be required for Wnt-mediated inactivation of GSK-3 kinase. Both pathways seem to involve interactions with G-proteins. May be involved in transduction and intercellular transmission of polarity information during tissue morphogenesis and/or in differentiated tissues. In Mus musculus (Mouse), this protein is Frizzled-10 (Fzd10).